We begin with the raw amino-acid sequence, 914 residues long: Penicillin-binding protein 1A/1B (914 aa).

A disordered region spans residues 1–29 (MSDQFNSREARRKANSKSSPSPKKGKKRK). Residues 1 to 37 (MSDQFNSREARRKANSKSSPSPKKGKKRKKGGLFKKT) lie on the Cytoplasmic side of the membrane. Residues 38 to 58 (LFTLLILFVLGVVGGAVTFAV) form a helical; Signal-anchor for type II membrane protein membrane-spanning segment. Residues 59 to 914 (MVSDAPSLDE…TNSSSIEKTN (856 aa)) lie on the Extracellular side of the membrane. Positions 77–246 (STIYDKNGKE…TAYNPVKNPD (170 aa)) are transglycosylase. E115 acts as the Proton donor; for transglycosylase activity in catalysis. The transpeptidase stretch occupies residues 329 to 662 (TKAQDKLDEL…PDSVVEATVE (334 aa)). S390 serves as the catalytic Acyl-ester intermediate; for transpeptidase activity. The region spanning 708–795 (KLSGLNVKYD…SYEVPKAEDD (88 aa)) is the Fibronectin type-III domain. Residues 773 to 914 (TAVSDDGKST…TNSSSIEKTN (142 aa)) are disordered. Positions 798–828 (KKDQQQTDDEKQDDEKTQDDTQTDDSQKDDG) are enriched in basic and acidic residues. Residues 829-840 (QTDQDQTDDSTN) are compositionally biased toward acidic residues. Low complexity-rich tracts occupy residues 848-892 (NTNT…GSDT) and 900-914 (SNKT…EKTN).

The protein in the N-terminal section; belongs to the glycosyltransferase 51 family. This sequence in the C-terminal section; belongs to the transpeptidase family. In terms of processing, the product expressed from the translation of the ponA gene appears as two bands on a gel (1A and 1B), but the specific amino acid sequence of each protein is unknown. Post-translationally, the N-terminus is blocked.

Its subcellular location is the cell membrane. It localises to the forespore inner membrane. The enzyme catalyses [GlcNAc-(1-&gt;4)-Mur2Ac(oyl-L-Ala-gamma-D-Glu-L-Lys-D-Ala-D-Ala)](n)-di-trans,octa-cis-undecaprenyl diphosphate + beta-D-GlcNAc-(1-&gt;4)-Mur2Ac(oyl-L-Ala-gamma-D-Glu-L-Lys-D-Ala-D-Ala)-di-trans,octa-cis-undecaprenyl diphosphate = [GlcNAc-(1-&gt;4)-Mur2Ac(oyl-L-Ala-gamma-D-Glu-L-Lys-D-Ala-D-Ala)](n+1)-di-trans,octa-cis-undecaprenyl diphosphate + di-trans,octa-cis-undecaprenyl diphosphate + H(+). It catalyses the reaction Preferential cleavage: (Ac)2-L-Lys-D-Ala-|-D-Ala. Also transpeptidation of peptidyl-alanyl moieties that are N-acyl substituents of D-alanine.. It participates in cell wall biogenesis; peptidoglycan biosynthesis. Cell wall formation. Synthesis of cross-linked peptidoglycan from the lipid intermediates. The enzyme has a penicillin-insensitive transglycosylase N-terminal domain (formation of linear glycan strands) and a penicillin-sensitive transpeptidase C-terminal domain (cross-linking of the peptide subunits). Required for vegetative growth. Has a partially redundant function with PBP-2A (pbpA) during spore outgrowth. The protein is Penicillin-binding protein 1A/1B (ponA) of Bacillus subtilis (strain 168).